Reading from the N-terminus, the 152-residue chain is uncharacterized protein (152 aa).

The next 3 membrane-spanning stretches (helical) occupy residues 15-35 (IINV…IYDI), 43-63 (LVVA…LILT), and 117-137 (TFLL…KLLI).

This sequence to M.jannaschii MJ0129 and MJ0587.

It is found in the cell membrane. This is an uncharacterized protein from Methanocaldococcus jannaschii (strain ATCC 43067 / DSM 2661 / JAL-1 / JCM 10045 / NBRC 100440) (Methanococcus jannaschii).